The sequence spans 216 residues: Dephospho-CoA kinase (216 aa).

The region spanning 18-216 (IIGVIGPPCS…SELASVLQSK (199 aa)) is the DPCK domain. Position 26–31 (26–31 (CSGKST)) interacts with ATP.

It belongs to the CoaE family.

Its subcellular location is the cytoplasm. The catalysed reaction is 3'-dephospho-CoA + ATP = ADP + CoA + H(+). The protein operates within cofactor biosynthesis; coenzyme A biosynthesis; CoA from (R)-pantothenate: step 5/5. Its function is as follows. Catalyzes the phosphorylation of the 3'-hydroxyl group of dephosphocoenzyme A to form coenzyme A. The polypeptide is Dephospho-CoA kinase (Rhodopirellula baltica (strain DSM 10527 / NCIMB 13988 / SH1)).